A 106-amino-acid chain; its full sequence is MADFLGMMKQAAQLQSKMKAMQAELDQIEVEGLSGGGLVKIRMSAKMEVRGVSIDPSLLKADEGEVLEDLLVAALADAHRKAEAAMQEKMQALTGGLGLPPGLGLG.

The protein belongs to the YbaB/EbfC family. As to quaternary structure, homodimer.

The protein resides in the cytoplasm. Its subcellular location is the nucleoid. Binds to DNA and alters its conformation. May be involved in regulation of gene expression, nucleoid organization and DNA protection. This is Nucleoid-associated protein RPB_0667 from Rhodopseudomonas palustris (strain HaA2).